Reading from the N-terminus, the 395-residue chain is Abhydrolase domain-containing protein (395 aa).

In terms of domain architecture, AB hydrolase-1 spans 117 to 331; that stretch reads PTIVINHGLT…INAIDDPIAP (215 aa). Active-site charge relay system residues include Ser200, Asp327, and His356.

It belongs to the AB hydrolase superfamily. AB hydrolase 4 family.

The sequence is that of Abhydrolase domain-containing protein (abhd) from Dictyostelium discoideum (Social amoeba).